The primary structure comprises 372 residues: 3-dehydroquinate synthase (372 aa).

Residues 116–120, 140–141, Lys-153, Lys-162, and 180–183 each bind NAD(+); these read GVVGD, TT, and TLKT. Positions 195, 260, and 277 each coordinate Zn(2+).

It belongs to the sugar phosphate cyclases superfamily. Dehydroquinate synthase family. It depends on NAD(+) as a cofactor. The cofactor is Co(2+). Zn(2+) serves as cofactor.

It localises to the cytoplasm. It catalyses the reaction 7-phospho-2-dehydro-3-deoxy-D-arabino-heptonate = 3-dehydroquinate + phosphate. It functions in the pathway metabolic intermediate biosynthesis; chorismate biosynthesis; chorismate from D-erythrose 4-phosphate and phosphoenolpyruvate: step 2/7. Functionally, catalyzes the conversion of 3-deoxy-D-arabino-heptulosonate 7-phosphate (DAHP) to dehydroquinate (DHQ). In Prochlorococcus marinus (strain MIT 9313), this protein is 3-dehydroquinate synthase.